A 314-amino-acid chain; its full sequence is Regulator of microtubule dynamics protein 1 (314 aa).

Lysine 165 bears the N6-succinyllysine mark. TPR repeat units follow at residues 168-204 and 222-258; these read AICL…NPKD and PWYQ…DPNF.

It belongs to the RMDN family. Interacts with microtubules.

The protein resides in the cytoplasm. Its subcellular location is the cytoskeleton. It is found in the spindle. It localises to the spindle pole. This is Regulator of microtubule dynamics protein 1 (RMDN1) from Homo sapiens (Human).